We begin with the raw amino-acid sequence, 225 residues long: NAD(P)H-quinone oxidoreductase subunit K, chloroplastic (225 aa).

Residues Cys-43, Cys-44, Cys-108, and Cys-139 each coordinate [4Fe-4S] cluster.

This sequence belongs to the complex I 20 kDa subunit family. In terms of assembly, NDH is composed of at least 16 different subunits, 5 of which are encoded in the nucleus. [4Fe-4S] cluster serves as cofactor.

It localises to the plastid. Its subcellular location is the chloroplast thylakoid membrane. It carries out the reaction a plastoquinone + NADH + (n+1) H(+)(in) = a plastoquinol + NAD(+) + n H(+)(out). It catalyses the reaction a plastoquinone + NADPH + (n+1) H(+)(in) = a plastoquinol + NADP(+) + n H(+)(out). NDH shuttles electrons from NAD(P)H:plastoquinone, via FMN and iron-sulfur (Fe-S) centers, to quinones in the photosynthetic chain and possibly in a chloroplast respiratory chain. The immediate electron acceptor for the enzyme in this species is believed to be plastoquinone. Couples the redox reaction to proton translocation, and thus conserves the redox energy in a proton gradient. The chain is NAD(P)H-quinone oxidoreductase subunit K, chloroplastic from Carica papaya (Papaya).